The chain runs to 216 residues: Adenylate kinase (216 aa).

Position 10–15 (10–15) interacts with ATP; sequence GAGKGT. Residues 30–59 form an NMP region; that stretch reads STGDIFRKNISENTPLGIEAKGYIDNGQLV. AMP is bound by residues Thr-31, Arg-36, 57–59, 85–88, and Gln-92; these read QLV and GFPR. Residues 126-163 form an LID region; sequence GRRVCPSCGASYHVKFNPPTNEGKCDLCGSEVIQRKDD. Arg-127 contributes to the ATP binding site. 2 residues coordinate Zn(2+): Cys-130 and Cys-133. 136–137 lines the ATP pocket; that stretch reads SY. Residues Cys-150 and Cys-153 each coordinate Zn(2+). Positions 160 and 171 each coordinate AMP. Position 199 (Lys-199) interacts with ATP.

It belongs to the adenylate kinase family. As to quaternary structure, monomer.

It localises to the cytoplasm. It carries out the reaction AMP + ATP = 2 ADP. It participates in purine metabolism; AMP biosynthesis via salvage pathway; AMP from ADP: step 1/1. In terms of biological role, catalyzes the reversible transfer of the terminal phosphate group between ATP and AMP. Plays an important role in cellular energy homeostasis and in adenine nucleotide metabolism. The protein is Adenylate kinase of Clostridium beijerinckii (strain ATCC 51743 / NCIMB 8052) (Clostridium acetobutylicum).